Consider the following 1174-residue polypeptide: DNA-directed RNA polymerase subunit beta' (1174 aa).

Zn(2+) contacts are provided by Cys60, Cys62, Cys75, and Cys78. Residues Asp450, Asp452, and Asp454 each contribute to the Mg(2+) site. Residues Cys795, Cys869, Cys876, and Cys879 each contribute to the Zn(2+) site.

The protein belongs to the RNA polymerase beta' chain family. In terms of assembly, the RNAP catalytic core consists of 2 alpha, 1 beta, 1 beta' and 1 omega subunit. When a sigma factor is associated with the core the holoenzyme is formed, which can initiate transcription. It depends on Mg(2+) as a cofactor. Requires Zn(2+) as cofactor.

The catalysed reaction is RNA(n) + a ribonucleoside 5'-triphosphate = RNA(n+1) + diphosphate. Functionally, DNA-dependent RNA polymerase catalyzes the transcription of DNA into RNA using the four ribonucleoside triphosphates as substrates. In Clostridium kluyveri (strain ATCC 8527 / DSM 555 / NBRC 12016 / NCIMB 10680 / K1), this protein is DNA-directed RNA polymerase subunit beta'.